Consider the following 517-residue polypeptide: 2,3-bisphosphoglycerate-independent phosphoglycerate mutase 1 (517 aa).

Mn(2+) contacts are provided by Asp-17 and Ser-67. Residue Ser-67 is the Phosphoserine intermediate of the active site. Residues His-128, Arg-158–Asp-159, Arg-190, Arg-196, Arg-267–Arg-270, and Lys-340 each bind substrate. Mn(2+) is bound by residues Asp-407, His-411, Asp-448, His-449, and His-467.

It belongs to the BPG-independent phosphoglycerate mutase family. Mn(2+) is required as a cofactor.

The enzyme catalyses (2R)-2-phosphoglycerate = (2R)-3-phosphoglycerate. Its pathway is carbohydrate degradation; glycolysis; pyruvate from D-glyceraldehyde 3-phosphate: step 3/5. Functionally, catalyzes the interconversion of 2-phosphoglycerate and 3-phosphoglycerate. This is 2,3-bisphosphoglycerate-independent phosphoglycerate mutase 1 from Methanosarcina barkeri (strain Fusaro / DSM 804).